A 3546-amino-acid polypeptide reads, in one-letter code: Ubiquitin carboxyl-terminal hydrolase 34 (3546 aa).

Phosphoserine is present on residues Ser352, Ser486, Ser487, and Ser490. Disordered regions lie at residues 502–535 (KEEE…SGGS), 550–679 (VQQR…VFNT), and 1459–1478 (TGSY…DQVE). Over residues 511–524 (APSPWSPAASPQSS) the composition is skewed to low complexity. 2 stretches are compositionally biased toward polar residues: residues 525–534 (DNSDTHQSGG) and 560–570 (SMQGSSDETAN). The span at 571–590 (SGEDGSSGPGSSSGHSDGSS) shows a compositional bias: low complexity. A compositionally biased stretch (polar residues) spans 591–609 (NEVNSSHASQSAGSPGSEV). Acidic residues predominate over residues 610 to 627 (QSEDIADIEALKEEDEDD). Ser649 bears the Phosphoserine mark. A compositionally biased stretch (polar residues) spans 659 to 671 (QGMSERNGTSSGT). The segment covering 1467-1477 (PDSDDSSEDQV) has biased composition (acidic residues). Ser1469 is modified (phosphoserine). The region spanning 1894-2239 (VGLTNLGATC…SAYMLFYKRM (346 aa)) is the USP domain. The active-site Nucleophile is Cys1903. His2164 acts as the Proton acceptor in catalysis. Ser2488 bears the Phosphoserine mark. Residues 3331–3443 (NSLQEQEAKE…HAEEQSNNGR (113 aa)) are disordered. Basic and acidic residues predominate over residues 3336 to 3347 (QEAKERKTKDDE). Residues Ser3358 and Ser3359 each carry the phosphoserine modification. The residue at position 3381 (Thr3381) is a Phosphothreonine. Residues Ser3386 and Ser3406 each carry the phosphoserine modification. Polar residues predominate over residues 3421-3432 (SSFSEDMSNIRS). Over residues 3433–3443 (QHAEEQSNNGR) the composition is skewed to basic and acidic residues. Ser3503 carries the post-translational modification Phosphoserine.

Belongs to the peptidase C19 family. Interacts with AXIN1 and AXIN2. As to expression, expressed in brain at low level.

The catalysed reaction is Thiol-dependent hydrolysis of ester, thioester, amide, peptide and isopeptide bonds formed by the C-terminal Gly of ubiquitin (a 76-residue protein attached to proteins as an intracellular targeting signal).. Its function is as follows. Ubiquitin hydrolase that can remove conjugated ubiquitin from AXIN1 and AXIN2, thereby acting as a regulator of Wnt signaling pathway. Acts as an activator of the Wnt signaling pathway downstream of the beta-catenin destruction complex by deubiquitinating and stabilizing AXIN1 and AXIN2, leading to promote nuclear accumulation of AXIN1 and AXIN2 and positively regulate beta-catenin (CTNBB1)-mediated transcription. Recognizes and hydrolyzes the peptide bond at the C-terminal Gly of ubiquitin. Involved in the processing of poly-ubiquitin precursors as well as that of ubiquitinated proteins. The chain is Ubiquitin carboxyl-terminal hydrolase 34 (USP34) from Homo sapiens (Human).